Reading from the N-terminus, the 409-residue chain is Peptidase T (409 aa).

H78 contacts Zn(2+). D80 is a catalytic residue. D140 serves as a coordination point for Zn(2+). Catalysis depends on E173, which acts as the Proton acceptor. Positions 174, 196, and 379 each coordinate Zn(2+).

Belongs to the peptidase M20B family. The cofactor is Zn(2+).

It localises to the cytoplasm. It catalyses the reaction Release of the N-terminal residue from a tripeptide.. Its function is as follows. Cleaves the N-terminal amino acid of tripeptides. The sequence is that of Peptidase T from Salmonella paratyphi A (strain ATCC 9150 / SARB42).